A 329-amino-acid polypeptide reads, in one-letter code: 4-hydroxythreonine-4-phosphate dehydrogenase (329 aa).

Substrate-binding residues include His136 and Thr137. His166, His211, and His266 together coordinate a divalent metal cation. Lys274, Asn283, and Arg292 together coordinate substrate.

Belongs to the PdxA family. In terms of assembly, homodimer. It depends on Zn(2+) as a cofactor. Mg(2+) is required as a cofactor. The cofactor is Co(2+).

It localises to the cytoplasm. It carries out the reaction 4-(phosphooxy)-L-threonine + NAD(+) = 3-amino-2-oxopropyl phosphate + CO2 + NADH. Its pathway is cofactor biosynthesis; pyridoxine 5'-phosphate biosynthesis; pyridoxine 5'-phosphate from D-erythrose 4-phosphate: step 4/5. Catalyzes the NAD(P)-dependent oxidation of 4-(phosphooxy)-L-threonine (HTP) into 2-amino-3-oxo-4-(phosphooxy)butyric acid which spontaneously decarboxylates to form 3-amino-2-oxopropyl phosphate (AHAP). This chain is 4-hydroxythreonine-4-phosphate dehydrogenase, found in Escherichia fergusonii (strain ATCC 35469 / DSM 13698 / CCUG 18766 / IAM 14443 / JCM 21226 / LMG 7866 / NBRC 102419 / NCTC 12128 / CDC 0568-73).